Consider the following 135-residue polypeptide: Large ribosomal subunit protein uL22 (135 aa).

The disordered stretch occupies residues 112-135; that stretch reads KKPEKKKLKAKSAKTEEAPKAAEV. Positions 124–135 are enriched in basic and acidic residues; sequence AKTEEAPKAAEV.

Belongs to the universal ribosomal protein uL22 family. Part of the 50S ribosomal subunit.

This protein binds specifically to 23S rRNA; its binding is stimulated by other ribosomal proteins, e.g. L4, L17, and L20. It is important during the early stages of 50S assembly. It makes multiple contacts with different domains of the 23S rRNA in the assembled 50S subunit and ribosome. Its function is as follows. The globular domain of the protein is located near the polypeptide exit tunnel on the outside of the subunit, while an extended beta-hairpin is found that lines the wall of the exit tunnel in the center of the 70S ribosome. The polypeptide is Large ribosomal subunit protein uL22 (Brachyspira hyodysenteriae (strain ATCC 49526 / WA1)).